The sequence spans 148 residues: MEVILLEKIANLGNLGDKVNVKAGYGRNYLLPQGKATAATPANIAEFEARRAELEKAAAEKKASAETRAAQLAELEVTITATAGDEGKLFGSIGTADIADALTASGVEVAKSEVRLPNGTIRQTGEYDVAVHLHTDVEATVKLIVVAG.

This sequence belongs to the bacterial ribosomal protein bL9 family.

Binds to the 23S rRNA. The chain is Large ribosomal subunit protein bL9 from Stutzerimonas stutzeri (strain A1501) (Pseudomonas stutzeri).